The sequence spans 468 residues: Putrescine aminotransferase (468 aa).

Pyridoxal 5'-phosphate is bound by residues 150-151 (GT) and glutamine 274. Residue lysine 300 is modified to N6-(pyridoxal phosphate)lysine. Position 332 (threonine 332) interacts with pyridoxal 5'-phosphate.

It belongs to the class-III pyridoxal-phosphate-dependent aminotransferase family. Putrescine aminotransferase subfamily. Pyridoxal 5'-phosphate is required as a cofactor.

It catalyses the reaction an alkane-alpha,omega-diamine + 2-oxoglutarate = an omega-aminoaldehyde + L-glutamate. The enzyme catalyses putrescine + 2-oxoglutarate = 1-pyrroline + L-glutamate + H2O. The catalysed reaction is cadaverine + 2-oxoglutarate = 5-aminopentanal + L-glutamate. It participates in amine and polyamine degradation; putrescine degradation; 4-aminobutanal from putrescine (transaminase route): step 1/1. Catalyzes the aminotransferase reaction from putrescine to 2-oxoglutarate, leading to glutamate and 4-aminobutanal, which spontaneously cyclizes to form 1-pyrroline. This is the first step in one of two pathways for putrescine degradation, where putrescine is converted into 4-aminobutanoate (gamma-aminobutyrate or GABA) via 4-aminobutanal. Also functions as a cadaverine transaminase in a a L-lysine degradation pathway to succinate that proceeds via cadaverine, glutarate and L-2-hydroxyglutarate. The sequence is that of Putrescine aminotransferase from Pectobacterium atrosepticum (strain SCRI 1043 / ATCC BAA-672) (Erwinia carotovora subsp. atroseptica).